The following is a 236-amino-acid chain: Probable apoptosis inhibitor 2 (236 aa).

One copy of the BIR repeat lies at 85 to 150 (RKRSFASFKW…AHAADCAFRR (66 aa)). Cys-123, Cys-126, His-142, and Cys-146 together coordinate Zn(2+). The RING-type zinc finger occupies 189 to 223 (CKVCFVNEKSVCFLPCRHLVVCAECSPRCKRCCVC).

This Orgyia pseudotsugata multicapsid polyhedrosis virus (OpMNPV) protein is Probable apoptosis inhibitor 2 (IAP2).